A 651-amino-acid polypeptide reads, in one-letter code: Threonine--tRNA ligase (651 aa).

Residues 1 to 61 (MPTIQLPDGS…DKDVSLRIIT (61 aa)) enclose the TGS domain. A catalytic region spans residues 242–533 (DHRLLAKKMD…LLEESAGKLP (292 aa)). Residues Cys333, His384, and His510 each coordinate Zn(2+). A disordered region spans residues 631-651 (ISQRSRKSPAPSPLFPVGGES).

This sequence belongs to the class-II aminoacyl-tRNA synthetase family. In terms of assembly, homodimer. Zn(2+) serves as cofactor.

It is found in the cytoplasm. It carries out the reaction tRNA(Thr) + L-threonine + ATP = L-threonyl-tRNA(Thr) + AMP + diphosphate + H(+). Its function is as follows. Catalyzes the attachment of threonine to tRNA(Thr) in a two-step reaction: L-threonine is first activated by ATP to form Thr-AMP and then transferred to the acceptor end of tRNA(Thr). Also edits incorrectly charged L-seryl-tRNA(Thr). This Coxiella burnetii (strain RSA 493 / Nine Mile phase I) protein is Threonine--tRNA ligase.